A 212-amino-acid polypeptide reads, in one-letter code: Thymidylate kinase (212 aa).

10–17 (GLEGAGKT) provides a ligand contact to ATP.

Belongs to the thymidylate kinase family.

The enzyme catalyses dTMP + ATP = dTDP + ADP. In terms of biological role, phosphorylation of dTMP to form dTDP in both de novo and salvage pathways of dTTP synthesis. This is Thymidylate kinase from Yersinia enterocolitica serotype O:8 / biotype 1B (strain NCTC 13174 / 8081).